A 662-amino-acid chain; its full sequence is Leucine aminopeptidase 2 (662 aa).

A peptide is bound by residues 178–180 and 304–309; these read QLE and PYGGME. His333 is a Zn(2+) binding site. The active-site Proton acceptor is the Glu334. Zn(2+) contacts are provided by His337 and Glu356. Tyr422 serves as the catalytic Proton donor.

It belongs to the peptidase M1 family. It depends on Zn(2+) as a cofactor.

It is found in the cytoplasm. Its subcellular location is the nucleus. It catalyses the reaction an epoxide + H2O = an ethanediol. Aminopeptidase that preferentially cleaves di- and tripeptides. Also has low epoxide hydrolase activity (in vitro). Can hydrolyze the epoxide leukotriene LTA(4) but it forms preferentially 5,6-dihydroxy-7,9,11,14-eicosatetraenoic acid rather than the cytokine leukotriene B(4) as the product compared to the homologous mammalian enzyme (in vitro). The polypeptide is Leucine aminopeptidase 2 (Kluyveromyces lactis (strain ATCC 8585 / CBS 2359 / DSM 70799 / NBRC 1267 / NRRL Y-1140 / WM37) (Yeast)).